A 105-amino-acid chain; its full sequence is Urease subunit beta (105 aa).

It belongs to the urease beta subunit family. In terms of assembly, heterotrimer of UreA (gamma), UreB (beta) and UreC (alpha) subunits. Three heterotrimers associate to form the active enzyme.

The protein resides in the cytoplasm. It catalyses the reaction urea + 2 H2O + H(+) = hydrogencarbonate + 2 NH4(+). It functions in the pathway nitrogen metabolism; urea degradation; CO(2) and NH(3) from urea (urease route): step 1/1. The chain is Urease subunit beta from Pseudomonas putida (strain GB-1).